Consider the following 456-residue polypeptide: UDP-N-acetylmuramoylalanine--D-glutamate ligase (456 aa).

119–125 (GSNGKTT) is a binding site for ATP.

The protein belongs to the MurCDEF family.

The protein localises to the cytoplasm. It carries out the reaction UDP-N-acetyl-alpha-D-muramoyl-L-alanine + D-glutamate + ATP = UDP-N-acetyl-alpha-D-muramoyl-L-alanyl-D-glutamate + ADP + phosphate + H(+). It participates in cell wall biogenesis; peptidoglycan biosynthesis. Cell wall formation. Catalyzes the addition of glutamate to the nucleotide precursor UDP-N-acetylmuramoyl-L-alanine (UMA). This is UDP-N-acetylmuramoylalanine--D-glutamate ligase from Limosilactobacillus reuteri (strain DSM 20016) (Lactobacillus reuteri).